A 103-amino-acid chain; its full sequence is Carboxysome shell protein CsoS1 (103 aa).

In terms of domain architecture, BMC spans alanine 9–glycine 94.

Belongs to the bacterial microcompartments protein family. CsoS1 subfamily. Homohexamer with a small central pore. Forms a CsoS2-CsoS1-RuBisCO complex.

Its subcellular location is the carboxysome. Its function is as follows. One of the shell proteins of the carboxysome, a polyhedral inclusion where RuBisCO (ribulose bisphosphate carboxylase, ccbL-ccbS) is sequestered. Assembles into hexamers which make sheets that form the facets of the polyhedral carboxysome. In Prochlorococcus marinus (strain MIT 9313), this protein is Carboxysome shell protein CsoS1.